Consider the following 447-residue polypeptide: Tubulin alpha-1 chain (447 aa).

GTP-binding residues include glutamine 11, glutamate 72, serine 141, glycine 145, threonine 146, threonine 180, asparagine 207, and asparagine 229. A Mg(2+)-binding site is contributed by glutamate 72. Glutamate 255 is a catalytic residue.

It belongs to the tubulin family. As to quaternary structure, dimer of alpha and beta chains. A typical microtubule is a hollow water-filled tube with an outer diameter of 25 nm and an inner diameter of 15 nM. Alpha-beta heterodimers associate head-to-tail to form protofilaments running lengthwise along the microtubule wall with the beta-tubulin subunit facing the microtubule plus end conferring a structural polarity. Microtubules usually have 13 protofilaments but different protofilament numbers can be found in some organisms and specialized cells. It depends on Mg(2+) as a cofactor.

The protein localises to the cytoplasm. It is found in the cytoskeleton. The catalysed reaction is GTP + H2O = GDP + phosphate + H(+). Functionally, tubulin is the major constituent of microtubules, a cylinder consisting of laterally associated linear protofilaments composed of alpha- and beta-tubulin heterodimers. Microtubules grow by the addition of GTP-tubulin dimers to the microtubule end, where a stabilizing cap forms. Below the cap, tubulin dimers are in GDP-bound state, owing to GTPase activity of alpha-tubulin. The protein is Tubulin alpha-1 chain (TUB1) of Saccharomyces cerevisiae (strain ATCC 204508 / S288c) (Baker's yeast).